The sequence spans 166 residues: Thioredoxin, mitochondrial (166 aa).

The transit peptide at 1–59 (MAQRLLLGRFLTSVISRKPPQGVWASLTSKTLQTPQYNAGGLTVMPSPARTVHTTRVCL) directs the protein to the mitochondrion. Positions 61–166 (TFNVQDGPDF…LEAFLKKLIG (106 aa)) constitute a Thioredoxin domain. Active-site nucleophile residues include Cys-90 and Cys-93. A disulfide bond links Cys-90 and Cys-93. Lys-152 bears the N6-acetyllysine; alternate mark. The residue at position 152 (Lys-152) is an N6-succinyllysine; alternate.

This sequence belongs to the thioredoxin family. Monomer.

It is found in the mitochondrion. In terms of biological role, important for the control of mitochondrial reactive oxygen species homeostasis, apoptosis regulation and cell viability. Is involved in various redox reactions including the reduction of protein disulfide bonds, through the reversible oxidation of its active center dithiol to a disulfide. This is Thioredoxin, mitochondrial (Txn2) from Mus musculus (Mouse).